A 463-amino-acid polypeptide reads, in one-letter code: Autophagy-related protein 36 (463 aa).

An RING-type; atypical zinc finger spans residues 5-45 (CSICLEVLVDKEAFTEPCLHYYHNECIKEWTKRANTCPKCR). Residues 85 to 131 (TNLCALCEDPSTSLIYCESCGGSFHFNCIGIGDELDSEWCCPLCGMF) form a PHD-type zinc finger. Polar residues predominate over residues 229–242 (TQNSQSSEFSTENN). The tract at residues 229-281 (TQNSQSSEFSTENNVVPLKNTHELGRKLKKPRRASGIKKNVVERSSSHQSTQI) is disordered. A compositionally biased stretch (basic residues) spans 255–264 (KLKKPRRASG).

In terms of assembly, interacts with ATG28.

Functionally, micropexophagy-specific protein required for efficient micropexophagic apparatus (MIPA) formation but not for general autophagy. The chain is Autophagy-related protein 36 (ATG35) from Komagataella phaffii (strain GS115 / ATCC 20864) (Yeast).